Here is a 224-residue protein sequence, read N- to C-terminus: Transcription cofactor HES-6 (224 aa).

The disordered stretch occupies residues 1-31; the sequence is MAPPAAPGRDRVGREDEDGWETRGDRKARKP. A compositionally biased stretch (basic and acidic residues) spans 8–25; sequence GRDRVGREDEDGWETRGD. One can recognise a bHLH domain in the interval 25-77; sequence DRKARKPLVEKKRRARINESLQELRLLLAGAEVQAKLENAEVLELTVRRVQGV. In terms of domain architecture, Orange spans 96-129; that stretch reads FAAGYIQCMHEVHTFVSTCQAIDATVAAELLNHL. Residues 147 to 161 are compositionally biased toward low complexity; the sequence is DALAGPPRAPGRSGW. Positions 147 to 205 are disordered; that stretch reads DALAGPPRAPGRSGWPAGGAPGSPIPSPPGPGDDLCSDLEEAPEAELSQAPAEGPDLVP. Positions 181–190 are enriched in acidic residues; it reads LCSDLEEAPE. The short motif at 221-224 is the WRPW motif element; that stretch reads WRPW.

In terms of assembly, transcription repression requires formation of a complex with a corepressor protein of the Groucho/TLE family. Interacts with HES1.

It localises to the nucleus. Does not bind DNA itself but suppresses both HES1-mediated N box-dependent transcriptional repression and binding of HES1 to E box sequences. Also suppresses HES1-mediated inhibition of the heterodimer formed by ASCL1/MASH1 and TCF3/E47, allowing ASCL1 and TCF3 to up-regulate transcription in its presence. Promotes cell differentiation. The chain is Transcription cofactor HES-6 from Homo sapiens (Human).